Consider the following 513-residue polypeptide: Sphingolipid C9-methyltransferase (513 aa).

The next 2 helical transmembrane spans lie at 52 to 72 (ILFS…GLGF) and 74 to 94 (TWVF…WSIM). S-adenosyl-L-methionine contacts are provided by residues 222 to 223 (YT), 259 to 267 (VLDIGCGWG), 285 to 290 (TLGRNQ), and 315 to 316 (YR).

This sequence belongs to the CFA/CMAS family.

Its subcellular location is the membrane. The enzyme catalyses a (4E,8E)-4-sphinga-4,8-dienine ceramide + S-adenosyl-L-methionine = a 9-methyl-(4E,8E)-sphinga-4,8-dienine ceramide + S-adenosyl-L-homocysteine + H(+). Its pathway is lipid metabolism; sphingolipid metabolism. Functionally, catalyzes methylation of the sphingoid base component of glucosylceramides (GluCers) at the C9-position. Sphingolipid C9-methylation requires 4,8-desaturated ceramides as substrates. Glucosylceramides play important roles in growth, differentiation and pathogenicity. The methyl group at the C9-position distinguishes fungal glucosylceramides from those of plants and animals, and may thus play a role in host-pathogen interactions enabling the host to recognize the fungal attack and initiate specific defense responses. Not necessary for vegetative growth at low temperatures, but plays a role in hyphal formation on solid medium. In Candida albicans (strain SC5314 / ATCC MYA-2876) (Yeast), this protein is Sphingolipid C9-methyltransferase.